We begin with the raw amino-acid sequence, 173 residues long: Protein-export protein SecB 1 (173 aa).

It belongs to the SecB family. Homotetramer, a dimer of dimers. One homotetramer interacts with 1 SecA dimer.

It localises to the cytoplasm. In terms of biological role, one of the proteins required for the normal export of preproteins out of the cell cytoplasm. It is a molecular chaperone that binds to a subset of precursor proteins, maintaining them in a translocation-competent state. It also specifically binds to its receptor SecA. The polypeptide is Protein-export protein SecB 1 (Gluconobacter oxydans (strain 621H) (Gluconobacter suboxydans)).